The sequence spans 188 residues: Diphosphoinositol polyphosphate phosphohydrolase DDP1 (188 aa).

Positions 1–21 (MGKTADNHGPVRSETAREGRE) are enriched in basic and acidic residues. The interval 1–23 (MGKTADNHGPVRSETAREGRENQ) is disordered. A Nudix hydrolase domain is found at 30–179 (GARLVAGCIC…KRPELLEALN (150 aa)). R32, S52, S53, and K63 together coordinate 1D-myo-inositol hexakisphosphate. R32, S52, S53, and K63 together coordinate 5-diphospho-1D-myo-inositol 1,2,3,4,6-pentakisphosphate. P(1),P(5)-bis(5'-adenosyl) pentaphosphate contacts are provided by R32, S52, S53, and K63. The Mg(2+) site is built by K63, E80, and E84. The Nudix box signature appears at 65–86 (GVEKDEPNYETTAQRETWEEAG). D100 lines the P(1),P(5)-bis(5'-adenosyl) pentaphosphate pocket. 4 residues coordinate 1D-myo-inositol hexakisphosphate: R102, R129, R152, and R171. Residue R102 participates in 5-diphospho-1D-myo-inositol 1,2,3,4,6-pentakisphosphate binding. Positions 152 and 171 each coordinate 5-diphospho-1D-myo-inositol 1,2,3,4,6-pentakisphosphate. Residues R152, R171, and E173 each coordinate P(1),P(5)-bis(5'-adenosyl) pentaphosphate.

This sequence belongs to the Nudix hydrolase family. DIPP subfamily. Mg(2+) is required as a cofactor. Mn(2+) serves as cofactor. It depends on Zn(2+) as a cofactor.

Its subcellular location is the cytoplasm. It is found in the nucleus. It carries out the reaction diphospho-myo-inositol polyphosphate + H2O = myo-inositol polyphosphate + phosphate.. The enzyme catalyses P(1),P(6)-bis(5'-adenosyl) hexaphosphate + H2O = adenosine 5'-pentaphosphate + AMP + 2 H(+). The catalysed reaction is P(1),P(5)-bis(5'-adenosyl) pentaphosphate + H2O = adenosine 5'-tetraphosphate + AMP + 2 H(+). It catalyses the reaction [phosphate](n+1) + n H2O = (n+1) phosphate + n H(+). Functionally, may eliminate potentially toxic dinucleoside polyphosphates during sporulation. Most active against diadenosine 5',5'''-P1,P6-hexaphosphate (Ap6A). Can also hydrolyze diadenosine 5',5'''-P1,P5-pentaphosphate (Ap5A), adenosine 5'-pentaphosphate (p5A), and adenosine 5'-tetraphosphate (p4A) are also substrates, but not diadenosine 5',5'''-P1,P4-tetraphosphate (Ap4A) or other dinucleotides, mononucleotides, nucleotide sugars, or nucleotide alcohols. Also cleaves a beta-phosphate from the diphosphate groups in PP-InsP5 (diphosphoinositol pentakisphosphate) and [PP]2-InsP4 (bisdiphosphoinositol tetrakisphosphate). Also has endopolyphosphatase activity. The sequence is that of Diphosphoinositol polyphosphate phosphohydrolase DDP1 (DDP1) from Saccharomyces cerevisiae (strain ATCC 204508 / S288c) (Baker's yeast).